Consider the following 388-residue polypeptide: Probable mannan endo-1,4-beta-mannosidase A-1 (388 aa).

The first 20 residues, 1–20, serve as a signal peptide directing secretion; it reads MKLSPLMALAGLASAQLALA. The substrate site is built by Trp93 and Asn206. The active-site Proton donor is the Glu207. The N-linked (GlcNAc...) asparagine glycan is linked to Asn264. A substrate-binding site is contributed by Tyr282. Residue Glu315 is the Nucleophile of the active site. N-linked (GlcNAc...) asparagine glycosylation occurs at Asn335. Trp345 is a binding site for substrate.

Belongs to the glycosyl hydrolase 5 (cellulase A) family.

Its subcellular location is the secreted. The enzyme catalyses Random hydrolysis of (1-&gt;4)-beta-D-mannosidic linkages in mannans, galactomannans and glucomannans.. In terms of biological role, endo-1,4-mannanase, a crucial enzyme for depolymerization of seed galactomannans and wood galactoglucomannans. The polypeptide is Probable mannan endo-1,4-beta-mannosidase A-1 (manA-1) (Aspergillus terreus (strain NIH 2624 / FGSC A1156)).